Here is a 590-residue protein sequence, read N- to C-terminus: Arginine--tRNA ligase (590 aa).

The 'HIGH' region signature appears at 131-141 (PNIAKEMHVGH).

The protein belongs to the class-I aminoacyl-tRNA synthetase family. As to quaternary structure, monomer.

It localises to the cytoplasm. It carries out the reaction tRNA(Arg) + L-arginine + ATP = L-arginyl-tRNA(Arg) + AMP + diphosphate. The polypeptide is Arginine--tRNA ligase (Synechococcus sp. (strain RCC307)).